The primary structure comprises 242 residues: Biosynthetic peptidoglycan transglycosylase (242 aa).

A helical membrane pass occupies residues 19-39 (ILAALAVFWGGGIALFSVVPV).

This sequence belongs to the glycosyltransferase 51 family.

It is found in the cell inner membrane. It carries out the reaction [GlcNAc-(1-&gt;4)-Mur2Ac(oyl-L-Ala-gamma-D-Glu-L-Lys-D-Ala-D-Ala)](n)-di-trans,octa-cis-undecaprenyl diphosphate + beta-D-GlcNAc-(1-&gt;4)-Mur2Ac(oyl-L-Ala-gamma-D-Glu-L-Lys-D-Ala-D-Ala)-di-trans,octa-cis-undecaprenyl diphosphate = [GlcNAc-(1-&gt;4)-Mur2Ac(oyl-L-Ala-gamma-D-Glu-L-Lys-D-Ala-D-Ala)](n+1)-di-trans,octa-cis-undecaprenyl diphosphate + di-trans,octa-cis-undecaprenyl diphosphate + H(+). It participates in cell wall biogenesis; peptidoglycan biosynthesis. Its function is as follows. Peptidoglycan polymerase that catalyzes glycan chain elongation from lipid-linked precursors. The chain is Biosynthetic peptidoglycan transglycosylase from Salmonella choleraesuis (strain SC-B67).